The following is a 420-amino-acid chain: L-rhamnose isomerase (420 aa).

The Mn(2+) site is built by His262, Asp294, and Asp296.

It belongs to the rhamnose isomerase family. As to quaternary structure, homotetramer. The cofactor is Mn(2+).

The protein localises to the cytoplasm. The catalysed reaction is L-rhamnopyranose = L-rhamnulose. It participates in carbohydrate degradation; L-rhamnose degradation; glycerone phosphate from L-rhamnose: step 1/3. In terms of biological role, catalyzes the interconversion of L-rhamnose and L-rhamnulose. The protein is L-rhamnose isomerase of Pectobacterium carotovorum subsp. carotovorum (strain PC1).